The chain runs to 121 residues: Large ribosomal subunit protein uL18 (121 aa).

It belongs to the universal ribosomal protein uL18 family. Part of the 50S ribosomal subunit; part of the 5S rRNA/L5/L18/L25 subcomplex. Contacts the 5S and 23S rRNAs.

Functionally, this is one of the proteins that bind and probably mediate the attachment of the 5S RNA into the large ribosomal subunit, where it forms part of the central protuberance. In Buchnera aphidicola subsp. Baizongia pistaciae (strain Bp), this protein is Large ribosomal subunit protein uL18.